An 872-amino-acid polypeptide reads, in one-letter code: DNA mismatch repair protein MutS (872 aa).

632 to 639 (GPNMGGKS) is an ATP binding site.

Belongs to the DNA mismatch repair MutS family.

In terms of biological role, this protein is involved in the repair of mismatches in DNA. It is possible that it carries out the mismatch recognition step. This protein has a weak ATPase activity. This Colwellia psychrerythraea (strain 34H / ATCC BAA-681) (Vibrio psychroerythus) protein is DNA mismatch repair protein MutS.